Consider the following 371-residue polypeptide: Cytochrome b (371 aa).

4 helical membrane-spanning segments follow: residues 25-45 (FGSMLLACLALQVLTGFFLAV), 69-90 (WMMQNLHAIGASMFFICIYIHI), 105-125 (WMSGITLLITLMATAFFGYVL), and 170-190 (FFALHFILPFAIISMSSLHII). Heme b-binding residues include His75 and His89. Positions 174 and 188 each coordinate heme b. His193 is a binding site for a ubiquinone. A run of 4 helical transmembrane segments spans residues 218 to 238 (YKDLLFLTLMILFMLIIVSFF), 280 to 300 (LGGALALVMSIMILFIIPFTH), 312 to 332 (LSQLMFWTLVSTFITITWAAT), and 339 to 358 (YIIISQVTATLYFIFFISMP).

This sequence belongs to the cytochrome b family. As to quaternary structure, the cytochrome bc1 complex contains 3 respiratory subunits (MT-CYB, CYC1 and UQCRFS1), 2 core proteins (UQCRC1 and UQCRC2) and probably 6 low-molecular weight proteins. Heme b serves as cofactor.

It is found in the mitochondrion inner membrane. Functionally, component of the ubiquinol-cytochrome c reductase complex (complex III or cytochrome b-c1 complex) that is part of the mitochondrial respiratory chain. The b-c1 complex mediates electron transfer from ubiquinol to cytochrome c. Contributes to the generation of a proton gradient across the mitochondrial membrane that is then used for ATP synthesis. The sequence is that of Cytochrome b (MT-CYB) from Python molurus (Indian python).